Reading from the N-terminus, the 295-residue chain is MQNALQKYYDFLRIERRLSPYTLTNYRRQLSAVTELLTQNGIRSWQQVTPSVVRFILAESRKAGLHEKSLALRLSALRQFLAYLVVQEELKVNPATGISAPKQGKYLPKNIDQEQIGKLLDNRSNEPIDIRDRAMLELMYSSGLRLSELHGLDLNHVNLQSREVRVLGKGSKERILPVGHQALDAVLDWLQVRLRFNPKDNALFVSSQGGRLTPRAIQKRMEIWGVKQGLSTHLNPHKLRHSFATHMLEASADLRAVQELLGHSNLATTQIYTHLDFKHLTDVYDQAHPRAKRKG.

The region spanning 1–85 (MQNALQKYYD…ALRQFLAYLV (85 aa)) is the Core-binding (CB) domain. Residues 106–285 (YLPKNIDQEQ…DFKHLTDVYD (180 aa)) enclose the Tyr recombinase domain. Active-site residues include R145, K169, H237, R240, and H263. Y272 functions as the O-(3'-phospho-DNA)-tyrosine intermediate in the catalytic mechanism.

It belongs to the 'phage' integrase family. XerC subfamily. In terms of assembly, forms a cyclic heterotetrameric complex composed of two molecules of XerC and two molecules of XerD.

Its subcellular location is the cytoplasm. In terms of biological role, site-specific tyrosine recombinase, which acts by catalyzing the cutting and rejoining of the recombining DNA molecules. The XerC-XerD complex is essential to convert dimers of the bacterial chromosome into monomers to permit their segregation at cell division. It also contributes to the segregational stability of plasmids. In Actinobacillus succinogenes (strain ATCC 55618 / DSM 22257 / CCUG 43843 / 130Z), this protein is Tyrosine recombinase XerC.